We begin with the raw amino-acid sequence, 235 residues long: Segregation and condensation protein A (235 aa).

The protein belongs to the ScpA family. Component of a cohesin-like complex composed of ScpA, ScpB and the Smc homodimer, in which ScpA and ScpB bind to the head domain of Smc. The presence of the three proteins is required for the association of the complex with DNA.

The protein localises to the cytoplasm. Its function is as follows. Participates in chromosomal partition during cell division. May act via the formation of a condensin-like complex containing Smc and ScpB that pull DNA away from mid-cell into both cell halves. The protein is Segregation and condensation protein A of Streptococcus agalactiae serotype Ia (strain ATCC 27591 / A909 / CDC SS700).